We begin with the raw amino-acid sequence, 171 residues long: Myosin regulatory light polypeptide 9 (171 aa).

A compositionally biased stretch (basic residues) spans 1–15 (MSSKRAKAKTTKKRP). The interval 1–21 (MSSKRAKAKTTKKRPQSATSN) is disordered. S2 bears the N-acetylserine mark. The residue at position 19 (T19) is a Phosphothreonine; by MLCK, CIT and ROCK2. S20 bears the Phosphoserine; by CDC42BP, CIT, MLCK, PAK1, ROCK1, ROCK2, DAPK1, DAPK2 and ZIPK/DAPK3 mark. EF-hand domains are found at residues 29-64 (SQIQEFKEAFNMIDQNRDGFIDKEDLHDMLASLGKN) and 98-133 (DPEDVIRNAFACFDEEASGFIHEDHLRELLTTMGDR). 4 residues coordinate Ca(2+): D42, N44, D46, and D53.

Myosin is a hexamer of 2 heavy chains and 4 light chains: interacts with myosin heavy chain MYO19. Interacts with LUZP1; the interaction results in inhibition of phosphorylation of MYL9 by DAPK3. In terms of processing, phosphorylation increases the actin-activated myosin ATPase activity and thereby regulates the contractile activity. It is required to generate the driving force in the migration of the cells but not necessary for localization of myosin-2 at the leading edge. Phosphorylation is required for myotube formation. Phosphorylated by DAPK3; DAPK3-mediated phosphorylation is inhibited by LUZP1. In terms of tissue distribution, smooth muscle tissues and in some, but not all, nonmuscle cells.

Its subcellular location is the cytoplasm. It is found in the cytoskeleton. The protein localises to the cell cortex. Its function is as follows. Myosin regulatory subunit that plays an important role in regulation of both smooth muscle and nonmuscle cell contractile activity via its phosphorylation. Implicated in cytokinesis, receptor capping, and cell locomotion. In myoblasts, may regulate PIEZO1-dependent cortical actomyosin assembly involved in myotube formation. The chain is Myosin regulatory light polypeptide 9 (Myl9) from Rattus norvegicus (Rat).